Consider the following 377-residue polypeptide: Anhydro-N-acetylmuramic acid kinase (377 aa).

18–25 (GTSADGID) contributes to the ATP binding site.

Belongs to the anhydro-N-acetylmuramic acid kinase family.

The catalysed reaction is 1,6-anhydro-N-acetyl-beta-muramate + ATP + H2O = N-acetyl-D-muramate 6-phosphate + ADP + H(+). The protein operates within amino-sugar metabolism; 1,6-anhydro-N-acetylmuramate degradation. It functions in the pathway cell wall biogenesis; peptidoglycan recycling. In terms of biological role, catalyzes the specific phosphorylation of 1,6-anhydro-N-acetylmuramic acid (anhMurNAc) with the simultaneous cleavage of the 1,6-anhydro ring, generating MurNAc-6-P. Is required for the utilization of anhMurNAc either imported from the medium or derived from its own cell wall murein, and thus plays a role in cell wall recycling. The protein is Anhydro-N-acetylmuramic acid kinase of Xanthomonas oryzae pv. oryzae (strain MAFF 311018).